Reading from the N-terminus, the 454-residue chain is Tyrosine aminotransferase (454 aa).

The residue at position 1 (methionine 1) is an N-acetylmethionine. N6-(pyridoxal phosphate)lysine is present on lysine 280. Serine 448 is modified (phosphoserine).

The protein belongs to the class-I pyridoxal-phosphate-dependent aminotransferase family. Homodimer. Pyridoxal 5'-phosphate serves as cofactor.

It carries out the reaction L-tyrosine + 2-oxoglutarate = 3-(4-hydroxyphenyl)pyruvate + L-glutamate. The protein operates within amino-acid degradation; L-phenylalanine degradation; acetoacetate and fumarate from L-phenylalanine: step 2/6. Functionally, transaminase involved in tyrosine breakdown. Converts tyrosine to p-hydroxyphenylpyruvate. Can catalyze the reverse reaction, using glutamic acid, with 2-oxoglutarate as cosubstrate (in vitro). Has much lower affinity and transaminase activity towards phenylalanine. This is Tyrosine aminotransferase (TAT) from Homo sapiens (Human).